The primary structure comprises 491 residues: Monodehydroascorbate reductase 5, chlorplastic (491 aa).

The transit peptide at 1–42 (MASTAAAASSQGCISWALRQRGLGGGGARAVPVLPRRRFCVS) directs the protein to the chloroplast. FAD contacts are provided by residues 61 to 64 (GGNA), E88, R95, K100, and 194 to 195 (RD). Residues 217 to 223 (GGYIGME), E241, R247, and G306 each bind NAD(+). 219–223 (YIGME) lines the NADP(+) pocket. NADP(+)-binding residues include R247 and G306. D344 contacts FAD. Position 360–361 (360–361 (EH)) interacts with NAD(+). Position 360–361 (360–361 (EH)) interacts with NADP(+). V362 is an FAD binding site. L-ascorbate is bound at residue R366. Y391 is a binding site for FAD. Y391 is an NAD(+) binding site. Y391 is a binding site for NADP(+). R393 contacts L-ascorbate.

The protein belongs to the FAD-dependent oxidoreductase family. It depends on FAD as a cofactor.

The protein resides in the plastid. The protein localises to the chloroplast. The enzyme catalyses 2 monodehydro-L-ascorbate radical + NADH + H(+) = 2 L-ascorbate + NAD(+). Functionally, catalyzes the conversion of monodehydroascorbate to ascorbate, oxidizing NADH in the process. Ascorbate is a major antioxidant against reactive oxygen species (ROS) and nitric oxide (NO). This is Monodehydroascorbate reductase 5, chlorplastic from Oryza sativa subsp. japonica (Rice).